A 289-amino-acid polypeptide reads, in one-letter code: Somatostatin-like receptor F_48D10.1 (289 aa).

Residues 1–57 (MEPLDQTPGFPLSPEPNYWYETTPSLLLVSYPHLLDISSNQSTQSVPFQGSSALLTA) are Extracellular-facing. A glycan (N-linked (GlcNAc...) asparagine) is linked at Asn40. A helical membrane pass occupies residues 58 to 79 (VIYITVFVVGLTGNTLAIYVVL). Over 80–89 (RYAGMKTVTN) the chain is Cytoplasmic. Residues 90 to 110 (IYILNLAVADELYIVGLPFLA) traverse the membrane as a helical segment. Over 111–126 (TQNVLSYWPFGSFLCR) the chain is Extracellular. Residues Cys125 and Cys221 are joined by a disulfide bond. A helical transmembrane segment spans residues 127 to 148 (VVMTADSMNQFTSIFCLTVMSI). The Cytoplasmic portion of the chain corresponds to 149–170 (DRYLAVVHPIRSTKWRHPRVAK). The helical transmembrane segment at 171-191 (VVSAAVWAVSFVVVLPVVIFS) threads the bilayer. The Extracellular segment spans residues 192-240 (DVQVRPSRPLQVGTSSKCLVKRVQETFNSCNMIWPEPKNVWSTAFILYT). A helical membrane pass occupies residues 241–261 (AMVGFFGPLLIICLCYLLIVI). Residues 262–289 (KVRHRMSAAQVGAVVSTCPLNICCLSRR) are Cytoplasmic-facing.

Belongs to the G-protein coupled receptor 1 family.

The protein localises to the cell membrane. In Takifugu rubripes (Japanese pufferfish), this protein is Somatostatin-like receptor F_48D10.1.